Here is a 147-residue protein sequence, read N- to C-terminus: Large ribosomal subunit protein uL22c (147 aa).

It belongs to the universal ribosomal protein uL22 family. In terms of assembly, part of the 50S ribosomal subunit.

It is found in the plastid. This protein binds specifically to 23S rRNA. In terms of biological role, the globular domain of the protein is located near the polypeptide exit tunnel on the outside of the subunit, while an extended beta-hairpin is found that lines the wall of the exit tunnel in the center of the 70S ribosome. In Cuscuta gronovii (Common dodder), this protein is Large ribosomal subunit protein uL22c (rpl22).